The following is a 364-amino-acid chain: Fructose-bisphosphate aldolase C-A (364 aa).

Residues Arg-56 and Lys-147 each coordinate substrate. The active-site Proton acceptor is Glu-188. Catalysis depends on Lys-230, which acts as the Schiff-base intermediate with dihydroxyacetone-P.

This sequence belongs to the class I fructose-bisphosphate aldolase family. In terms of assembly, homotetramer. Expressed specifically in Purkinje cells in the brain.

It carries out the reaction beta-D-fructose 1,6-bisphosphate = D-glyceraldehyde 3-phosphate + dihydroxyacetone phosphate. Its pathway is carbohydrate degradation; glycolysis; D-glyceraldehyde 3-phosphate and glycerone phosphate from D-glucose: step 4/4. In Danio rerio (Zebrafish), this protein is Fructose-bisphosphate aldolase C-A.